A 347-amino-acid chain; its full sequence is tRNA N6-adenosine threonylcarbamoyltransferase (347 aa).

Fe cation contacts are provided by His-111 and His-115. Substrate is bound by residues Leu-134 to Gly-138, Asp-167, Gly-180, and Asn-277. Asp-305 is a binding site for Fe cation.

Belongs to the KAE1 / TsaD family. The cofactor is Fe(2+).

The protein resides in the cytoplasm. The enzyme catalyses L-threonylcarbamoyladenylate + adenosine(37) in tRNA = N(6)-L-threonylcarbamoyladenosine(37) in tRNA + AMP + H(+). Required for the formation of a threonylcarbamoyl group on adenosine at position 37 (t(6)A37) in tRNAs that read codons beginning with adenine. Is involved in the transfer of the threonylcarbamoyl moiety of threonylcarbamoyl-AMP (TC-AMP) to the N6 group of A37, together with TsaE and TsaB. TsaD likely plays a direct catalytic role in this reaction. In Actinobacillus pleuropneumoniae serotype 5b (strain L20), this protein is tRNA N6-adenosine threonylcarbamoyltransferase.